The primary structure comprises 92 residues: Evasin P675 (92 aa).

An N-terminal signal peptide occupies residues 1–24 (MEVKTFAFLQIAVIIALGLHLAPA). 3 cysteine pairs are disulfide-bonded: Cys-44/Cys-63, Cys-48/Cys-65, and Cys-59/Cys-76. Residue Asn-47 is glycosylated (N-linked (GlcNAc...) asparagine). Residue Asn-70 is glycosylated (N-linked (GlcNAc...) asparagine).

It localises to the secreted. Its function is as follows. Salivary chemokine-binding protein which binds to host chemokines CXCL1, CXCL2, CXCL3, CXCL4, CXCL5, CXCL6, CXCL10, CXCL11 and CXCL13. The sequence is that of Evasin P675 from Ixodes ricinus (Common tick).